The chain runs to 477 residues: Ectonucleotide pyrophosphatase/phosphodiesterase family member 5 (477 aa).

The signal sequence occupies residues 1–24 (MTSKFLLVSFILAALSLSTTFSLQ). Zn(2+)-binding residues include D36 and T72. T72 serves as the catalytic Nucleophile. N-linked (GlcNAc...) asparagine glycans are attached at residues N101 and N158. D191, H195, D238, and H239 together coordinate Zn(2+). N292 and N329 each carry an N-linked (GlcNAc...) asparagine glycan. H339 contacts Zn(2+). N362, N369, N382, and N389 each carry an N-linked (GlcNAc...) asparagine glycan. The chain crosses the membrane as a helical span at residues 432–452 (PYFIGVSLGSIIVIVFFVIFI).

The protein belongs to the nucleotide pyrophosphatase/phosphodiesterase family. Zn(2+) serves as cofactor. In terms of processing, N-glycosylated.

The protein localises to the secreted. Its subcellular location is the membrane. Can hydrolyze NAD but cannot hydrolyze nucleotide di- and triphosphates. Lacks lysopholipase D activity. May play a role in neuronal cell communication. The sequence is that of Ectonucleotide pyrophosphatase/phosphodiesterase family member 5 from Homo sapiens (Human).